The primary structure comprises 226 residues: Hand transcription factor 1 (226 aa).

Over residues 1-15 (MVKSTTAGNNAVSSL) the composition is skewed to polar residues. The tract at residues 1-35 (MVKSTTAGNNAVSSLESTDSKKSRKEKSREKEHRR) is disordered. A basic motif region spans residues 23–36 (SRKEKSREKEHRRA). In terms of domain architecture, bHLH spans 23-77 (SRKEKSREKEHRRAQCINSAFEILQQHIPYLKSEERKSLPKIKTLRLAMQYIDHL). Residues 37-77 (QCINSAFEILQQHIPYLKSEERKSLPKIKTLRLAMQYIDHL) form a helix-loop-helix motif region.

It localises to the nucleus. In terms of biological role, probable transcription factor which regulates early embryonic myogenesis, in cooperation with transcription factors unc-120 and hlh-1. Involved in controlling the number and position of somatic gonadal precursor cells (SGPs) in the gonadal primordium, and embryonic body shape. The protein is Hand transcription factor 1 of Caenorhabditis elegans.